The primary structure comprises 153 residues: 3-hydroxyacyl-[acyl-carrier-protein] dehydratase FabZ (153 aa).

The active site involves H54.

This sequence belongs to the thioester dehydratase family. FabZ subfamily.

Its subcellular location is the cytoplasm. The catalysed reaction is a (3R)-hydroxyacyl-[ACP] = a (2E)-enoyl-[ACP] + H2O. Functionally, involved in unsaturated fatty acids biosynthesis. Catalyzes the dehydration of short chain beta-hydroxyacyl-ACPs and long chain saturated and unsaturated beta-hydroxyacyl-ACPs. This is 3-hydroxyacyl-[acyl-carrier-protein] dehydratase FabZ from Shewanella frigidimarina (strain NCIMB 400).